The primary structure comprises 336 residues: Fructose-1,6-bisphosphatase class 1 (336 aa).

The Mg(2+) site is built by glutamate 92, aspartate 115, leucine 117, and aspartate 118. Substrate is bound by residues 118-121, asparagine 211, tyrosine 244, 262-264, and lysine 274; these read DGSS and YLY. Residue glutamate 280 coordinates Mg(2+).

It belongs to the FBPase class 1 family. In terms of assembly, homotetramer. Mg(2+) serves as cofactor.

The protein resides in the cytoplasm. The catalysed reaction is beta-D-fructose 1,6-bisphosphate + H2O = beta-D-fructose 6-phosphate + phosphate. It participates in carbohydrate biosynthesis; gluconeogenesis. This Vibrio atlanticus (strain LGP32) (Vibrio splendidus (strain Mel32)) protein is Fructose-1,6-bisphosphatase class 1.